A 124-amino-acid chain; its full sequence is Ribonuclease VapC32 (124 aa).

Residues 2 to 112 enclose the PINc domain; it reads ILVDTSVWIE…TRDKRLKAAC (111 aa). Mg(2+) is bound by residues Asp5 and Asp86.

Belongs to the PINc/VapC protein family. Mg(2+) serves as cofactor.

Its function is as follows. Toxic component of a type II toxin-antitoxin (TA) system. An RNase. Its toxic effect is neutralized by coexpression with cognate antitoxin VapB32. This chain is Ribonuclease VapC32, found in Mycobacterium tuberculosis (strain CDC 1551 / Oshkosh).